The sequence spans 154 residues: Probable archaeosortase D (154 aa).

4 helical membrane passes run 6 to 26, 57 to 77, 91 to 111, and 125 to 145; these read AIYI…LKML, IIEI…LGYI, YSVF…ILII, and VISF…IYLL. The active-site Acyl-thioester intermediate is the C64. R106 acts as the Proton donor in catalysis.

This sequence belongs to the exosortase/archaeosortase family. Archaeosortase D subfamily.

Its subcellular location is the cell membrane. Transpeptidase that recognizes and modifies its substrate by proteolytic cleavage of a sorting signal. Following cleavage, a covalent intermediate is formed via a thioester bond between the archaeosortase and its substrate, which is then transferred and covalently attached to the cell membrane. The protein is Probable archaeosortase D of Methanocaldococcus jannaschii (strain ATCC 43067 / DSM 2661 / JAL-1 / JCM 10045 / NBRC 100440) (Methanococcus jannaschii).